We begin with the raw amino-acid sequence, 31 residues long: Photosystem II reaction center protein T (31 aa).

Residues 3 to 23 form a helical membrane-spanning segment; that stretch reads SFAYVLILTFAIATLFFAIAF.

The protein belongs to the PsbT family. PSII is composed of 1 copy each of membrane proteins PsbA, PsbB, PsbC, PsbD, PsbE, PsbF, PsbH, PsbI, PsbJ, PsbK, PsbL, PsbM, PsbT, PsbX, PsbY, PsbZ, Psb30/Ycf12, peripheral proteins PsbO, CyanoQ (PsbQ), PsbU, PsbV and a large number of cofactors. It forms dimeric complexes.

The protein resides in the cellular thylakoid membrane. Its function is as follows. Found at the monomer-monomer interface of the photosystem II (PS II) dimer, plays a role in assembly and dimerization of PSII. PSII is a light-driven water plastoquinone oxidoreductase, using light energy to abstract electrons from H(2)O, generating a proton gradient subsequently used for ATP formation. The chain is Photosystem II reaction center protein T from Synechococcus sp. (strain CC9902).